The chain runs to 147 residues: Large ribosomal subunit protein uL15 (147 aa).

Residues 1 to 57 (MRLHDVKPQKGSKKRKKRVARGISAGQGASAGLGMRGQKSRSGSGTRPGFEGGQQPL) form a disordered region. Residues 10–20 (KGSKKRKKRVA) are compositionally biased toward basic residues.

Belongs to the universal ribosomal protein uL15 family. In terms of assembly, part of the 50S ribosomal subunit.

Its function is as follows. Binds to the 23S rRNA. The polypeptide is Large ribosomal subunit protein uL15 (Nostoc punctiforme (strain ATCC 29133 / PCC 73102)).